The chain runs to 626 residues: Glyco-Gag protein (626 aa).

The Cytoplasmic portion of the chain corresponds to L1–R66. The chain crosses the membrane as a helical span at residues L67–S86. At E87–D626 the chain is on the extracellular side. N113 carries an N-linked (GlcNAc...) asparagine; by host glycan. 2 stretches are compositionally biased toward pro residues: residues P198–T212 and D249–P261. 2 disordered regions span residues P198–R306 and R522–D626. Composition is skewed to basic and acidic residues over residues R522–R554 and R574–K607. Positions E526–L566 form a coiled coil. The CCHC-type zinc-finger motif lies at D590–K607.

In terms of processing, glycosylated by host. Post-translationally, cleaved by host near the middle of the molecule, releasing the c-terminal half containing capsid and nucleoprotein domains op GAG.

It localises to the host cell membrane. Its function is as follows. Plays a role in viral particle release. Presumably acts by facilitating the fission of the virion bud at the cell surface. May prevent the antiviral activity of murine APOBEC3. The chain is Glyco-Gag protein from Mus musculus (Mouse).